The chain runs to 851 residues: UPF0508 protein CAGL0M08074g (851 aa).

This sequence belongs to the UPF0508 family.

This is UPF0508 protein CAGL0M08074g from Candida glabrata (strain ATCC 2001 / BCRC 20586 / JCM 3761 / NBRC 0622 / NRRL Y-65 / CBS 138) (Yeast).